A 653-amino-acid chain; its full sequence is ATP-dependent zinc metalloprotease FtsH 1 (653 aa).

The Cytoplasmic segment spans residues 1–7 (MSRFFKS). A helical transmembrane segment spans residues 8–28 (AAFPILIVVVLAFFAQRLINP). The Extracellular portion of the chain corresponds to 29-105 (GDSGPRYDYS…FDIEGTKSNG (77 aa)). The chain crosses the membrane as a helical span at residues 106–126 (WLSLLTYVLPFLIFIGFWIFL). The Cytoplasmic segment spans residues 127 to 653 (MNQVQGGGSK…MHFPERPELA (527 aa)). 198–205 (GPPGTGKT) contacts ATP. H420 is a binding site for Zn(2+). E421 is an active-site residue. Zn(2+) is bound by residues H424 and D496. Residues 603 to 653 (EEVFGAEASPPPDVPLPPATERGRDTPRPLPRPGLAGGAAEMHFPERPELA) are disordered. The span at 611–620 (SPPPDVPLPP) shows a compositional bias: pro residues.

This sequence in the central section; belongs to the AAA ATPase family. The protein in the C-terminal section; belongs to the peptidase M41 family. Homohexamer. The cofactor is Zn(2+).

Its subcellular location is the cell membrane. Its function is as follows. Acts as a processive, ATP-dependent zinc metallopeptidase for both cytoplasmic and membrane proteins. Plays a role in the quality control of integral membrane proteins. In Conexibacter woesei (strain DSM 14684 / CCUG 47730 / CIP 108061 / JCM 11494 / NBRC 100937 / ID131577), this protein is ATP-dependent zinc metalloprotease FtsH 1.